Consider the following 326-residue polypeptide: Balbiani ring protein 1 (326 aa).

Positions 1–33 are enriched in low complexity; sequence PSKSGPRPSKSGPRPSKSGPRPSKSGPRPSKSG. Residues 1 to 119 are disordered; that stretch reads PSKSGPRPSK…RESPVCDDAM (119 aa). Over residues 34-51 the composition is skewed to basic and acidic residues; the sequence is PRPEKCGSAMRKAEAEKC. Positions 93 to 102 are enriched in low complexity; sequence VTPTPEVPTT. Residues 107–119 are compositionally biased toward basic and acidic residues; sequence SESRESPVCDDAM.

In terms of tissue distribution, salivary gland.

It is found in the secreted. Its function is as follows. Used by the larvae to construct a supramolecular structure, the larval tube. This Chironomus pallidivittatus (Midge) protein is Balbiani ring protein 1 (BR1).